The sequence spans 90 residues: c-Myc-binding protein homolog (90 aa).

It belongs to the AMY1 family.

Its subcellular location is the nucleus. The chain is c-Myc-binding protein homolog (mycbp) from Dictyostelium discoideum (Social amoeba).